Here is a 154-residue protein sequence, read N- to C-terminus: Interleukin-2 (154 aa).

A signal peptide spans 1–20; the sequence is MYKMQLLSCIALTLALVANG. The O-linked (GalNAc...) threonine glycan is linked to Thr23. The cysteines at positions 78 and 126 are disulfide-linked.

The protein belongs to the IL-2 family.

Its subcellular location is the secreted. Its function is as follows. Cytokine produced by activated CD4-positive helper T-cells and to a lesser extend activated CD8-positive T-cells and natural killer (NK) cells that plays pivotal roles in the immune response and tolerance. Binds to a receptor complex composed of either the high-affinity trimeric IL-2R (IL2RA/CD25, IL2RB/CD122 and IL2RG/CD132) or the low-affinity dimeric IL-2R (IL2RB and IL2RG). Interaction with the receptor leads to oligomerization and conformation changes in the IL-2R subunits resulting in downstream signaling starting with phosphorylation of JAK1 and JAK3. In turn, JAK1 and JAK3 phosphorylate the receptor to form a docking site leading to the phosphorylation of several substrates including STAT5. This process leads to activation of several pathways including STAT, phosphoinositide-3-kinase/PI3K and mitogen-activated protein kinase/MAPK pathways. Functions as a T-cell growth factor and can increase NK-cell cytolytic activity as well. Promotes strong proliferation of activated B-cells and subsequently immunoglobulin production. Plays a pivotal role in regulating the adaptive immune system by controlling the survival and proliferation of regulatory T-cells, which are required for the maintenance of immune tolerance. Moreover, participates in the differentiation and homeostasis of effector T-cell subsets, including Th1, Th2, Th17 as well as memory CD8-positive T-cells. The sequence is that of Interleukin-2 (IL2) from Delphinapterus leucas (Beluga whale).